We begin with the raw amino-acid sequence, 401 residues long: Elongation factor Tu, apicoplast (401 aa).

The tr-type G domain occupies 10-206 (KPHINIGTIG…ALDSYIPLPK (197 aa)). The segment at 19 to 26 (GHVDHGKT) is G1. Position 19–26 (19–26 (GHVDHGKT)) interacts with GTP. Mg(2+) is bound at residue Thr-26. The G2 stretch occupies residues 60 to 64 (GITIK). Residues 81–84 (DCPG) form a G3 region. Residues 81–85 (DCPGH) and 136–139 (NKID) contribute to the GTP site. A G4 region spans residues 136–139 (NKID). The interval 173–175 (SAL) is G5.

The protein belongs to the TRAFAC class translation factor GTPase superfamily. Classic translation factor GTPase family. EF-Tu/EF-1A subfamily. As to quaternary structure, monomer.

It is found in the plastid. It localises to the apicoplast. The enzyme catalyses GTP + H2O = GDP + phosphate + H(+). GTP hydrolase that promotes the GTP-dependent binding of aminoacyl-tRNA to the A-site of ribosomes during protein biosynthesis. This is Elongation factor Tu, apicoplast (tufA) from Toxoplasma gondii.